We begin with the raw amino-acid sequence, 1365 residues long: Serine/threonine-protein kinase LMTK1 (1365 aa).

The helical transmembrane segment at 32 to 52 threads the bilayer; sequence LAVVAVSFSGIFTVVILMLAC. Residues 126–396 enclose the Protein kinase domain; sequence LLYLKEIGHG…PTAEEVHLLL (271 aa). ATP-binding positions include 132–140 and lysine 157; that span reads IGHGWFGKV. Aspartate 254 serves as the catalytic Proton acceptor. Serine 500 bears the Phosphoserine mark. 5 disordered regions span residues 550–623, 638–698, 791–1186, 1237–1293, and 1343–1365; these read PDCA…LPAE, DDPL…GYVS, QEAE…PAVP, ESPT…EWDG, and ISDS…YTEA. The segment covering 560 to 575 has biased composition (polar residues); sequence QAVTDQDNNSEESTVA. 2 stretches are compositionally biased toward low complexity: residues 638-655 and 675-686; these read DDPL…QPSP and SSNMSANNNSAS. Composition is skewed to polar residues over residues 848–860 and 869–879; these read LESS…QEAP and EATSGVFTDLS. Composition is skewed to low complexity over residues 904–918 and 981–993; these read PDSL…SASD and PLLS…LSKK. Residues 1015 to 1030 show a composition bias toward basic and acidic residues; sequence PEKHSGIQDSQKEQDL. A Phosphoserine modification is found at serine 1035. Residues 1037–1053 are compositionally biased toward polar residues; sequence GHQSVQAFPRSAVSSEV. The segment covering 1072–1083 has biased composition (low complexity); the sequence is PLGAQGPVGVQP. Over residues 1104 to 1132 the composition is skewed to polar residues; sequence GSGTEPQGPSGQLSGRAQQGQMGNPSTPR. A compositionally biased stretch (acidic residues) spans 1150–1164; the sequence is PEEDEDTEDSEESDE. Threonine 1156 carries the phosphothreonine modification. 5 positions are modified to phosphoserine: serine 1159, serine 1162, serine 1175, serine 1178, and serine 1253. Gly residues predominate over residues 1354 to 1365; that stretch reads PAAGAGGRYTEA.

It belongs to the protein kinase superfamily. Tyr protein kinase family. Interacts with CDK5. Autophosphorylated. Phosphorylated by CDK5. In terms of tissue distribution, expressed in brain, and, to a lower extent, in kidney, heart, lung and skeletal muscle. In the brain, expressed in the olfactory bulb, cerebellum, striatum, hippocampal formation, thalamus, hypothalamus, and pontine nuclei (at protein level).

It localises to the membrane. It is found in the cytoplasm. Its subcellular location is the perinuclear region. The protein localises to the cell projection. The protein resides in the dendrite. It localises to the axon. It is found in the growth cone. It carries out the reaction L-seryl-[protein] + ATP = O-phospho-L-seryl-[protein] + ADP + H(+). It catalyses the reaction L-threonyl-[protein] + ATP = O-phospho-L-threonyl-[protein] + ADP + H(+). Functionally, may be involved in neuronal differentiation. This chain is Serine/threonine-protein kinase LMTK1 (Aatk), found in Mus musculus (Mouse).